The sequence spans 207 residues: Phosphoribosylglycinamide formyltransferase (207 aa).

13–15 contacts N(1)-(5-phospho-beta-D-ribosyl)glycinamide; sequence GSN. Residues 100-103 and asparagine 120 each bind (6R)-10-formyltetrahydrofolate; that span reads MHIL. The Proton donor role is filled by histidine 122. A (6R)-10-formyltetrahydrofolate-binding site is contributed by aspartate 162. Glutamate 191 serves as a coordination point for N(1)-(5-phospho-beta-D-ribosyl)glycinamide.

The protein belongs to the GART family.

It carries out the reaction N(1)-(5-phospho-beta-D-ribosyl)glycinamide + (6R)-10-formyltetrahydrofolate = N(2)-formyl-N(1)-(5-phospho-beta-D-ribosyl)glycinamide + (6S)-5,6,7,8-tetrahydrofolate + H(+). It functions in the pathway purine metabolism; IMP biosynthesis via de novo pathway; N(2)-formyl-N(1)-(5-phospho-D-ribosyl)glycinamide from N(1)-(5-phospho-D-ribosyl)glycinamide (10-formyl THF route): step 1/1. The protein is Phosphoribosylglycinamide formyltransferase (ade5) of Schizosaccharomyces pombe (strain 972 / ATCC 24843) (Fission yeast).